Consider the following 236-residue polypeptide: Glycoprotein U23 (236 aa).

A signal peptide spans 1–17; sequence MLFLSFLLVCLCEEVRM. 3 N-linked (GlcNAc...) asparagine; by host glycosylation sites follow: Asn67, Asn80, and Asn103. Residues 184 to 204 form a helical membrane-spanning segment; it reads LVIWIGGISFIGAFVILIVIL.

The protein resides in the membrane. The chain is Glycoprotein U23 (U23) from Human herpesvirus 6A (strain Uganda-1102) (HHV-6 variant A).